Reading from the N-terminus, the 428-residue chain is Adenylosuccinate synthetase (428 aa).

GTP contacts are provided by residues 12–18 and 40–42; these read GDEGKGK and GHT. Aspartate 13 serves as the catalytic Proton acceptor. Positions 13 and 40 each coordinate Mg(2+). Residues 13–16, 38–41, threonine 129, arginine 143, glutamine 224, threonine 239, and arginine 303 contribute to the IMP site; these read DEGK and NAGH. Histidine 41 serves as the catalytic Proton donor. 299 to 305 contacts substrate; it reads VTTGRIR. Residues arginine 305, 331–333, and 410–412 contribute to the GTP site; these read KVD and AYG.

This sequence belongs to the adenylosuccinate synthetase family. Homodimer. The cofactor is Mg(2+).

The protein resides in the cytoplasm. It carries out the reaction IMP + L-aspartate + GTP = N(6)-(1,2-dicarboxyethyl)-AMP + GDP + phosphate + 2 H(+). The protein operates within purine metabolism; AMP biosynthesis via de novo pathway; AMP from IMP: step 1/2. In terms of biological role, plays an important role in the de novo pathway of purine nucleotide biosynthesis. Catalyzes the first committed step in the biosynthesis of AMP from IMP. The protein is Adenylosuccinate synthetase of Francisella tularensis subsp. mediasiatica (strain FSC147).